The chain runs to 347 residues: DNA-directed RNA polymerase subunit alpha (347 aa).

The tract at residues 1-243 is alpha N-terminal domain (alpha-NTD); it reads MLIKQGDRLI…DQISVFINFD (243 aa). Residues 260–347 form an alpha C-terminal domain (alpha-CTD) region; it reads FNEHLFKSID…EWKRKQQHEA (88 aa).

It belongs to the RNA polymerase alpha chain family. Homodimer. The RNAP catalytic core consists of 2 alpha, 1 beta, 1 beta' and 1 omega subunit. When a sigma factor is associated with the core the holoenzyme is formed, which can initiate transcription.

It catalyses the reaction RNA(n) + a ribonucleoside 5'-triphosphate = RNA(n+1) + diphosphate. DNA-dependent RNA polymerase catalyzes the transcription of DNA into RNA using the four ribonucleoside triphosphates as substrates. This chain is DNA-directed RNA polymerase subunit alpha, found in Nitratidesulfovibrio vulgaris (strain ATCC 29579 / DSM 644 / CCUG 34227 / NCIMB 8303 / VKM B-1760 / Hildenborough) (Desulfovibrio vulgaris).